The primary structure comprises 233 residues: tRNA (guanine-N(7)-)-methyltransferase (233 aa).

The tract at residues 1–22 (MIDENHPMRAAGNFFGRRHGKP) is disordered. Residues glutamate 64, glutamate 89, aspartate 116, and aspartate 138 each contribute to the S-adenosyl-L-methionine site. The active site involves aspartate 138. Substrate contacts are provided by residues lysine 142, aspartate 174, and 212–215 (TRYE).

This sequence belongs to the class I-like SAM-binding methyltransferase superfamily. TrmB family.

It catalyses the reaction guanosine(46) in tRNA + S-adenosyl-L-methionine = N(7)-methylguanosine(46) in tRNA + S-adenosyl-L-homocysteine. It functions in the pathway tRNA modification; N(7)-methylguanine-tRNA biosynthesis. In terms of biological role, catalyzes the formation of N(7)-methylguanine at position 46 (m7G46) in tRNA. This is tRNA (guanine-N(7)-)-methyltransferase from Brucella abortus (strain 2308).